The primary structure comprises 239 residues: MADS-box transcription factor 34 (239 aa).

An MADS-box domain is found at 1 to 61; the sequence is MGRGKVVLQR…GRLYQFSSSS (61 aa). The 91-residue stretch at 88-178 folds into the K-box domain; sequence MQNNYQEYVN…KRKLDEIDVE (91 aa). Residues 179–208 are disordered; the sequence is AAPPQPPWNGNCSNGHGGGGGVFSSEPPQP.

In terms of tissue distribution, highly expressed in leaves and at low levels in roots and spikelets (rice flower).

It localises to the nucleus. Probable transcription factor. This Oryza sativa subsp. japonica (Rice) protein is MADS-box transcription factor 34 (MADS34).